A 410-amino-acid chain; its full sequence is Lipoyl synthase, mitochondrial (410 aa).

Positions 125, 130, 136, 157, 161, 164, and 373 each coordinate [4Fe-4S] cluster. The 223-residue stretch at 140 to 362 (SDEEGTATAT…EKEAMDMGFL (223 aa)) folds into the Radical SAM core domain.

It belongs to the radical SAM superfamily. Lipoyl synthase family. [4Fe-4S] cluster is required as a cofactor.

The protein localises to the mitochondrion. It carries out the reaction [[Fe-S] cluster scaffold protein carrying a second [4Fe-4S](2+) cluster] + N(6)-octanoyl-L-lysyl-[protein] + 2 oxidized [2Fe-2S]-[ferredoxin] + 2 S-adenosyl-L-methionine + 4 H(+) = [[Fe-S] cluster scaffold protein] + N(6)-[(R)-dihydrolipoyl]-L-lysyl-[protein] + 4 Fe(3+) + 2 hydrogen sulfide + 2 5'-deoxyadenosine + 2 L-methionine + 2 reduced [2Fe-2S]-[ferredoxin]. Its pathway is protein modification; protein lipoylation via endogenous pathway; protein N(6)-(lipoyl)lysine from octanoyl-[acyl-carrier-protein]: step 2/2. Its function is as follows. Catalyzes the radical-mediated insertion of two sulfur atoms into the C-6 and C-8 positions of the octanoyl moiety bound to the lipoyl domains of lipoate-dependent enzymes, thereby converting the octanoylated domains into lipoylated derivatives. The chain is Lipoyl synthase, mitochondrial from Leishmania major.